The sequence spans 6684 residues: Replicase polyprotein 1ab (6684 aa).

Residues 2–108 form the CoV Nsp1 globular domain; sequence SSKQFKILVN…DFDLKIARTG (107 aa). A CoV Nsp2 N-terminal domain is found at 111–349; that stretch reads AIYVDQYMCG…KSLVACSVKR (239 aa). Zn(2+)-binding residues include C240, C242, C259, and C260. The interval 240-260 is C4; sequence CPCGSESSGVGDWTGFKTACC. Residues 378 to 773 form the CoV Nsp2 middle domain; that stretch reads NVGLLFKKTP…CNAARNDIEI (396 aa). Residues 768–879 form the CoV Nsp2 C-terminal domain; that stretch reads RNDIEIGGIP…VQRMYNKMGG (112 aa). One can recognise a Ubiquitin-like 1 domain in the interval 882–983; it reads KTVSFSEEVD…DGIMISQYDI (102 aa). The segment at 989-1032 is disordered; it reads EKSEVSASSEEEEVESVEEDPENEIVEASEGAEGTSSQEEVETV. A compositionally biased stretch (acidic residues) spans 997 to 1015; the sequence is SEEEEVESVEEDPENEIVE. One can recognise a Peptidase C16 1 domain in the interval 1055 to 1299; it reads PWAAAVDVQE…FKVEKVEQQP (245 aa). The active-site For PL1-PRO activity is C1093. The C4-type 1; degenerate zinc-finger motif lies at 1164–1195; that stretch reads CGCGEKEIVLERAVFKLTPLKESFNYGVCGDC. Catalysis depends on for PL1-PRO activity residues H1244 and D1257. The Macro domain maps to 1318 to 1489; the sequence is NDDLILPFYK…TIENFFSCSI (172 aa). Residues 1486 to 1542 enclose the Ubiquitin-like 2 domain; the sequence is SCSIPVNVTEDNVNHERVSVSFDKTYGEQLKGTVVIKDKDVTNQLPSAFDVGQKVIK. The Peptidase C16 2 domain maps to 1550-1803; that stretch reads AHYGFRDAAA…KVAASPKIVQ (254 aa). C1588 acts as the For PL2-PRO activity in catalysis. Positions 1667, 1670, 1694, and 1696 each coordinate Zn(2+). The C4-type 2; atypical zinc finger occupies 1667–1696; that stretch reads CDKCAKVEKFVGPVVAAPLAIHGTDETCVH. Active-site for PL2-PRO activity residues include H1741 and D1754. A helical transmembrane segment spans residues 1896–1916; that stretch reads LVLLLIAIYNFFYLFVSIPVV. The tract at residues 1896–2053 is HD1; it reads LVLLLIAIYN…LALKHIVFAC (158 aa). A 3Ecto domain is found at 1905–1970; it reads NFFYLFVSIP…LQVTWDFKSD (66 aa). Intrachain disulfides connect C1921-C1948 and C1939-C1945. A run of 2 helical transmembrane segments spans residues 1995-2015 and 2033-2053; these read CFLMYFVSQYLNLWLSYFGYV and FVIVVIVVKAVLALKHIVFAC. A Y1 region spans residues 2044–2134; the sequence is LALKHIVFAC…SVKQTVYATD (91 aa). One can recognise a CoV Nsp3 Y domain in the interval 2044–2384; that stretch reads LALKHIVFAC…PYERFTESVS (341 aa). Zn(2+) is bound by residues H2048, C2053, C2058, C2061, C2094, H2097, C2101, and C2104. The ZF1 stretch occupies residues 2048-2061; it reads HIVFACSNPSCKTC. The segment at 2094–2104 is ZF2; sequence CKKHNFYCKNC. Residues 2135 to 2224 are Y2; sequence RSHQEVTKVE…IVNSDLLEDL (90 aa). Residues 2135–2384 form a coV-Y region; sequence RSHQEVTKVE…PYERFTESVS (250 aa). The segment at 2225–2281 is Y3; it reads SVDFKGALFNAKKNVIKNSFNVDVSECKNLDECYRACNLNVSFSTFEMAVNNAHRFG. The tract at residues 2282-2384 is Y4; that stretch reads ILITDRSFNN…PYERFTESVS (103 aa). Helical transmembrane passes span 2401–2421, 2467–2487, 2497–2517, 2538–2558, 2666–2686, 2695–2715, 2721–2741, and 2746–2766; these read IVILVFVFIFICGLCSVYSVA, YGFIPTFGKSCPIVVGTVFDL, PAYVSIVGRSLVFAINAAFGV, CVFNTACTTLTGLGGTIVYCA, GAMLVNIIIACLAIAMCYGVL, CTFLIVMIIVTLVVNNVSYFV, FMIIYAIVYYFITRKLAYPGI, and FIIAYINMAPWYVITAYILVF. The HD2 stretch occupies residues 2401-2766; the sequence is IVILVFVFIF…YVITAYILVF (366 aa). One can recognise a Nsp4C domain in the interval 2783 to 2878; it reads LFEGDKFVGN…PTVSVNSTLQ (96 aa). One can recognise a Peptidase C30 domain in the interval 2879-3180; it reads SGLRKMAQPS…IRQMYGVNLQ (302 aa). Active-site for 3CL-PRO activity residues include H2919 and C3022. Transmembrane regions (helical) follow at residues 3187-3207, 3217-3237, 3242-3262, 3280-3300, 3313-3333, 3347-3367, 3371-3391, and 3394-3414; these read FFYPIMTAMTILFAFWLEFFM, TFVSIVLAVTTLISTVFVSGI, LFFMSFVLPSVILVTAHNLFW, MFLPVDMQGVMLTVFCFIVFV, WFSLAVTTILVIFNMVKIFGT, FVNMLTMIVSLTTKDWMVVIA, IAYYIVVCVMPSAFVSDFGFM, and ISIVYMACGYLFCCYYGILYW. The segment at 3187–3414 is HD3; sequence FFYPIMTAMT…FCCYYGILYW (228 aa). The region spanning 3475 to 3557 is the RdRp Nsp7 cofactor domain; it reads SKLTEMKCTN…SYFENTTILQ (83 aa). Positions 3558 to 3752 constitute a RdRp Nsp8 cofactor domain; it reads SVASAYAALP…ITCERTTKLQ (195 aa). One can recognise a Nsp9 ssRNA-binding domain in the interval 3753 to 3863; sequence NNEIMPGKLK…GYIGATVRLQ (111 aa). Positions 3864–4004 constitute an ExoN/MTase coactivator domain; it reads AGKPTEHPSN…TSMQSFTVDQ (141 aa). Residues C3937, C3940, H3946, C3953, C3979, C3982, C3990, and C3992 each contribute to the Zn(2+) site. 2 zinc fingers span residues 3937-3953 and 3979-3992; these read CIYCRCHVEHPAIDGLC and CVVCGCWLNNGCMC. One can recognise a NiRAN domain in the interval 4006 to 4255; sequence YLNRVRGSSA…ESENFVKSDI (250 aa). The 99-residue stretch at 4261–4359 folds into the Nsp12 Interface domain; it reads KQYDLLAYDF…WNLDVKLDTM (99 aa). Residues H4290, C4296, C4301, C4305, and C4482 each coordinate Zn(2+). The region spanning 4360–4927 is the Nsp12 RNA-dependent RNA polymerase domain; that stretch reads KLSMTDLLRF…SLYEKSTVLQ (568 aa). The rdRp Fingers N-ter stretch occupies residues 4362–4576; that stretch reads SMTDLLRFVT…HQKHLKSIAA (215 aa). The rdRp Palm N-ter stretch occupies residues 4577-4615; the sequence is TRNATVVIGSTKFYGGWDNMLKNLMRDVDNGCLMGWDYP. The 163-residue stretch at 4607 to 4769 folds into the RdRp catalytic domain; it reads GCLMGWDYPK…CYNKDYADLG (163 aa). The interval 4616–4674 is rdRp Fingers C-ter; that stretch reads KCDRALPNMIRMASAMILGSKHVGCCTHNDRFYRLSNELAQVLTEVVHCTGGFYFKPGG. H4637, C4640, and C4641 together coordinate Zn(2+). Residues 4675–4810 form a rdRp Palm C-ter region; the sequence is TTSGDGTTAY…SVGPHEFCSQ (136 aa). Residues S4754, D4755, and D4756 contribute to the active site. A rdRp Thumb region spans residues 4811–4927; the sequence is HTLQIVGPDG…SLYEKSTVLQ (117 aa). The 113-residue stretch at 4928–5040 folds into the CV ZBD domain; it reads AAGMCVVCGS…EDFNKLAVSD (113 aa). Positions 4932, 4935, 4943, 4946, 4953, 4956, 4960, 4966, 4977, 4982, 4999, and 5002 each coordinate Zn(2+). Residues 5175-5366 form the (+)RNA virus helicase ATP-binding domain; that stretch reads NTISKLYPVF…MCTLGPDVFL (192 aa). ATP is bound at residue 5210–5217; sequence GPPGSGKS. Residues 5367–5536 form the (+)RNA virus helicase C-terminal domain; that stretch reads HKCYRCPAEI…AKPETCGLFK (170 aa). Residues 5598–5812 form the ExoN domain; the sequence is LFCTRDFAMR…RCLAIHDCFV (215 aa). Active-site residues include D5616, E5618, and E5717. Positions 5733, 5735, 5751, 5754, 5782, 5786, and 5789 each coordinate Zn(2+). Active-site residues include H5793 and D5798. Zn(2+) is bound at residue C5804. An N7-MTase domain is found at 5821–6042; sequence YPFIDNEEKI…MLWHGFVNSK (222 aa). An S-adenosyl-L-methionine-binding site is contributed by 5856-5862; that stretch reads DVGNPKG. The segment at 5933 to 5947 is gpppA-binding; the sequence is CNGGALYVNNHAFHT. The Zn(2+) site is built by C5971, C5988, C5999, and H6002. The Nsp15 N-terminal oligomerization domain maps to 6046–6106; it reads SLENVAFNVV…NVAFELYAKR (61 aa). In terms of domain architecture, AV-Nsp11N/CoV-Nsp15M spans 6107–6224; sequence KLGLTPPLTI…IYVRKNGEYV (118 aa). Positions 6241–6381 constitute a NendoU domain; the sequence is KPRSTMEEDF…ENSHIKTFYP (141 aa). Residues H6271, H6286, K6327, K6429, D6513, K6553, and E6586 contribute to the active site. A Nidovirus-type SAM-dependent 2'-O-MTase domain is found at 6385-6681; sequence SAEWNPGYSM…KLLNFGNHFV (297 aa).

Belongs to the coronaviruses polyprotein 1ab family. As to quaternary structure, 3CL-PRO exists as monomer and homodimer. Eight copies of nsp7 and eight copies of nsp8 assemble to form a heterohexadecamer. Nsp9 is a dimer. Nsp10 forms a dodecamer. Mn(2+) serves as cofactor. Post-translationally, specific enzymatic cleavages in vivo by its own proteases yield mature proteins. 3CL-PRO is autocatalytically processed.

It localises to the host membrane. It is found in the host cytoplasm. Its subcellular location is the host perinuclear region. The protein localises to the host endoplasmic reticulum-Golgi intermediate compartment. The enzyme catalyses Thiol-dependent hydrolysis of ester, thioester, amide, peptide and isopeptide bonds formed by the C-terminal Gly of ubiquitin (a 76-residue protein attached to proteins as an intracellular targeting signal).. The catalysed reaction is RNA(n) + a ribonucleoside 5'-triphosphate = RNA(n+1) + diphosphate. It catalyses the reaction ATP + H2O = ADP + phosphate + H(+). It carries out the reaction a 5'-end diphospho-ribonucleoside in mRNA + GTP + H(+) = a 5'-end (5'-triphosphoguanosine)-ribonucleoside in mRNA + diphosphate. The enzyme catalyses a 5'-end (N(7)-methyl 5'-triphosphoguanosine)-ribonucleoside in mRNA + S-adenosyl-L-methionine = a 5'-end (N(7)-methyl 5'-triphosphoguanosine)-(2'-O-methyl-ribonucleoside) in mRNA + S-adenosyl-L-homocysteine + H(+). The catalysed reaction is uridylyl-uridylyl-ribonucleotide-RNA = a 3'-end uridylyl-2',3'-cyclophospho-uridine-RNA + a 5'-end dephospho-ribonucleoside-RNA. The replicase polyprotein of coronaviruses is a multifunctional protein: it contains the activities necessary for the transcription of negative stranded RNA, leader RNA, subgenomic mRNAs and progeny virion RNA as well as proteinases responsible for the cleavage of the polyprotein into functional products. Its function is as follows. Non-structural protein 1 inhibits host translation. By suppressing host gene expression, nsp1 facilitates efficient viral gene expression in infected cells and evasion from host immune response. Functionally, the papain-like proteinase 1 (PLP1) and papain-like proteinase 2 (PLP2) are responsible for the cleavages located at the N-terminus of the replicase polyprotein. In addition, PLP2 possesses a deubiquitinating/deISGylating activity and processes both 'Lys-48'- and 'Lys-63'-linked polyubiquitin chains from cellular substrates. PLP2 also antagonizes innate immune induction of type I interferon by blocking the nuclear translocation of host IRF-3. In terms of biological role, responsible for the majority of cleavages as it cleaves the C-terminus of replicase polyprotein at 11 sites. Recognizes substrates containing the core sequence [ILMVF]-Q-|-[SAGC]. Inhibited by the substrate-analog Cbz-Val-Asn-Ser-Thr-Leu-Gln-CMK. The helicase which contains a zinc finger structure displays RNA and DNA duplex-unwinding activities with 5' to 3' polarity. ATPase activity is strongly stimulated by poly(U), poly(dT), poly(C), poly(dA), but not by poly(G). Its function is as follows. The exoribonuclease acts on both ssRNA and dsRNA in a 3' to 5' direction. Functionally, nsp7-nsp8 hexadecamer may possibly confer processivity to the polymerase, maybe by binding to dsRNA or by producing primers utilized by the latter. In terms of biological role, forms a primer, NSP9-pU, which is utilized by the polymerase for the initiation of RNA chains. Interacts with ribosome signal recognition particle RNA (SRP). Together with NSP8, suppress protein integration into the cell membrane, thereby disrupting host immune defenses. RNA-directed RNA polymerase that catalyzes the transcription of viral genomic and subgenomic RNAs. Acts in complex with nsp7 and nsp8 to transcribe both the minus and positive strands of genomic RNA. The kinase-like NiRAN domain of NSP12 attaches one or more nucleotides to the amino terminus of NSP9, forming a covalent RNA-protein intermediate that serves as transcription/replication primer. Subgenomic RNAs (sgRNAs) are formed by discontinuous transcription: The polymerase has the ability to pause at transcription-regulating sequences (TRS) and jump to the leader TRS, resulting in a major deletion. This creates a series of subgenomic RNAs that are replicated, transcribed and translated. In addition, Nsp12 is a subunit of the viral RNA capping enzyme that catalyzes the RNA guanylyltransferase reaction for genomic and sub-genomic RNAs. Subsequently, the NiRAN domain transfers RNA to GDP, and forms the core cap structure GpppA-RNA. Its function is as follows. Plays a role in viral transcription/replication and prevents the simultaneous activation of host cell dsRNA sensors, such as MDA5/IFIH1, OAS, and PKR. Acts by degrading the 5'-polyuridines generated during replication of the poly(A) region of viral genomic and subgenomic RNAs. Catalyzes a two-step reaction in which a 2'3'-cyclic phosphate (2'3'-cP) is first generated by 2'-O transesterification, which is then hydrolyzed to a 3'-phosphate (3'-P). If not degraded, poly(U) RNA would hybridize with poly(A) RNA tails and activate host dsRNA sensors. This is Replicase polyprotein 1ab (rep) from Sus scrofa (Pig).